Here is a 262-residue protein sequence, read N- to C-terminus: Ankyrin repeat domain-containing protein 7 (262 aa).

ANK repeat units follow at residues 67 to 96, 100 to 129, 133 to 162, 166 to 195, and 199 to 228; these read KYRT…KINI, ENKS…DPNL, RYNT…DLEA, DGYT…DVNA, and YQRT…ELSC.

This Macaca fascicularis (Crab-eating macaque) protein is Ankyrin repeat domain-containing protein 7 (ANKRD7).